The following is a 151-amino-acid chain: Arginine repressor (151 aa).

Belongs to the ArgR family.

It is found in the cytoplasm. The protein operates within amino-acid biosynthesis; L-arginine biosynthesis [regulation]. Its function is as follows. Regulates arginine biosynthesis genes. The polypeptide is Arginine repressor (Pelotomaculum thermopropionicum (strain DSM 13744 / JCM 10971 / SI)).